Consider the following 267-residue polypeptide: Thymidylate synthase (267 aa).

A dUMP-binding site is contributed by R25. H55 is a (6R)-5,10-methylene-5,6,7,8-tetrahydrofolate binding site. Residue 130 to 131 (RR) participates in dUMP binding. C150 serves as the catalytic Nucleophile. Residues 170 to 173 (RSAD), N181, and 211 to 213 (HIY) each bind dUMP. Residue D173 participates in (6R)-5,10-methylene-5,6,7,8-tetrahydrofolate binding. A (6R)-5,10-methylene-5,6,7,8-tetrahydrofolate-binding site is contributed by A266.

It belongs to the thymidylate synthase family. Bacterial-type ThyA subfamily. As to quaternary structure, homodimer.

The protein localises to the cytoplasm. It carries out the reaction dUMP + (6R)-5,10-methylene-5,6,7,8-tetrahydrofolate = 7,8-dihydrofolate + dTMP. Its pathway is pyrimidine metabolism; dTTP biosynthesis. Functionally, catalyzes the reductive methylation of 2'-deoxyuridine-5'-monophosphate (dUMP) to 2'-deoxythymidine-5'-monophosphate (dTMP) while utilizing 5,10-methylenetetrahydrofolate (mTHF) as the methyl donor and reductant in the reaction, yielding dihydrofolate (DHF) as a by-product. This enzymatic reaction provides an intracellular de novo source of dTMP, an essential precursor for DNA biosynthesis. In Corynebacterium efficiens (strain DSM 44549 / YS-314 / AJ 12310 / JCM 11189 / NBRC 100395), this protein is Thymidylate synthase.